Consider the following 184-residue polypeptide: Adenylate kinase 1 (184 aa).

11-16 (GAGKGT) serves as a coordination point for ATP. The segment at 31–60 (STGDILRQAMKEQTPLGIKAQSYVDSGELV) is NMP. AMP-binding positions include Thr32, Arg37, 58-60 (ELV), 86-89 (GFPR), and Gln93. The tract at residues 127 to 133 (SRGRKDD) is LID. Residue Arg128 coordinates ATP. AMP contacts are provided by Arg130 and Arg141. Gln169 provides a ligand contact to ATP.

The protein belongs to the adenylate kinase family. Monomer.

Its subcellular location is the cytoplasm. The catalysed reaction is AMP + ATP = 2 ADP. The protein operates within purine metabolism; AMP biosynthesis via salvage pathway; AMP from ADP: step 1/1. Functionally, catalyzes the reversible transfer of the terminal phosphate group between ATP and AMP. Plays an important role in cellular energy homeostasis and in adenine nucleotide metabolism. This is Adenylate kinase 1 from Nostoc sp. (strain PCC 7120 / SAG 25.82 / UTEX 2576).